The following is a 363-amino-acid chain: Peptide chain release factor 2 (363 aa).

Gln-251 is subject to N5-methylglutamine.

Belongs to the prokaryotic/mitochondrial release factor family. Post-translationally, methylated by PrmC. Methylation increases the termination efficiency of RF2.

It localises to the cytoplasm. Its function is as follows. Peptide chain release factor 2 directs the termination of translation in response to the peptide chain termination codons UGA and UAA. This chain is Peptide chain release factor 2, found in Helicobacter pylori (strain P12).